The chain runs to 262 residues: MFPKKNRPMIANGDRVLKDAFKDVGKYIELPARRAFLQRSMTLGGLSLLTGCAITDDESVESALLAMSRFNNCVQGWLFDPNQLAPIYPESMITRPFPFNAYYGDDEVREVDAASFRLEVSGLVSDKHAWTLDELHALPQVDQVTRHICVEGWSAIGKWSGVPFTTFLRLVGADLDAKYVGFKCADDYYTSIDMATALHPQTQLTLSYDGQTLPARYGFPMKLRMPTKLGYKNPKYIQALFVTNSYPGGYWEDQGYNWFGGS.

Belongs to the MsrP family.

Functionally, part of the YedY1-YedZ1 system that may repair oxidized proteins containing methionine sulfoxide residues (Met-O). This Azospira oryzae (strain ATCC BAA-33 / DSM 13638 / PS) (Dechlorosoma suillum) protein is Putative protein-methionine-sulfoxide reductase subunit YedZ1.